A 956-amino-acid polypeptide reads, in one-letter code: Thrombospondin-3 (956 aa).

Residues 1–21 (MEKPELWGVLALLLLCSYTCG) form the signal peptide. Residues 22 to 193 (SQDLQVIDLL…VESMKIILGG (172 aa)) form the Laminin G-like domain. 21 disulfides stabilise this stretch: C278/C289, C283/C300, C303/C314, C320/C332, C326/C341, C344/C368, C374/C388, C382/C397, C400/C412, C418/C432, C426/C442, C444/C455, C471/C478, C483/C503, C519/C539, C542/C562, C578/C598, C601/C621, C639/C659, C679/C699, and C715/C936. The N-linked (GlcNAc...) asparagine glycan is linked to N310. In terms of domain architecture, EGF-like 1; calcium-binding spans 316–354 (DINECAHADPCFPGSSCINTMPGFHCEACPPGYKGTRVS). One can recognise an EGF-like 2; calcium-binding domain in the interval 370 to 410 (DIDECNDGNNGGCDPNSICTNTVGSFKCGPCRLGFLGNQSQ). N407 carries an N-linked (GlcNAc...) asparagine glycan. The EGF-like 3 domain occupies 414–456 (PARTCHSPAHSPCHIHAHCLFERNGAVSCQCNVGWAGNGNVCG). 8 TSP type-3 repeats span residues 457 to 491 (PDTDIDGYPDQALPCMDNNKHCKQDNCLLTPNSGQ), 492 to 527 (EDADNDGVGDQCDDDADGDGIKNVEDNCRLFPNKDQ), 528 to 550 (QNSDTDSFGDACDNCPNVPNNDQ), 551 to 586 (KDTDGNGEGDACDNDVDGDGIPNGLDNCPKVPNPLQ), 587 to 609 (TDRDEDGVGDACDSCPEMSNPTQ), 610 to 647 (TDADSDLVGDVCDTNEDSDGDGHQDTKDNCPQLPNSSQ), 648 to 687 (LDSDNDGLGDECDGDDDNDGVPDYIPPGPDNCRLVPNPNQ), and 688 to 723 (KDSDGNGVGDVCEDDFDNDAVVDPLDVCPESAEVTL). 2 disordered regions span residues 518 to 537 (NCRLFPNKDQQNSDTDSFGD) and 546 to 699 (PNND…GDVC). The span at 555–568 (GNGEGDACDNDVDG) shows a compositional bias: acidic residues. Positions 612 to 628 (ADSDLVGDVCDTNEDSD) are enriched in acidic residues. N644 carries an N-linked (GlcNAc...) asparagine glycan. Positions 650–667 (SDNDGLGDECDGDDDNDG) are enriched in acidic residues. Residues 727–941 (RAYQTVILDP…LQYRCNDTVP (215 aa)) form the TSP C-terminal domain. A glycan (N-linked (GlcNAc...) asparagine) is linked at N937.

The protein belongs to the thrombospondin family. Oligomer; disulfide-linked. In terms of tissue distribution, brain, lung and cartilage.

Adhesive glycoprotein that mediates cell-to-cell and cell-to-matrix interactions. Can bind to fibrinogen, fibronectin, laminin and type V collagen. This Mus musculus (Mouse) protein is Thrombospondin-3 (Thbs3).